A 227-amino-acid polypeptide reads, in one-letter code: Ion-translocating oxidoreductase complex subunit E (227 aa).

A run of 6 helical transmembrane segments spans residues 18 to 38 (ALVQ…VTNA), 39 to 59 (LGLG…VSLV), 69 to 89 (IPVF…LMNA), 93 to 113 (GLYL…IIIG), 125 to 145 (LPAV…LVLL), and 182 to 202 (HFLL…LIAL).

This sequence belongs to the NqrDE/RnfAE family. As to quaternary structure, the complex is composed of six subunits: RnfA, RnfB, RnfC, RnfD, RnfE and RnfG.

It is found in the cell inner membrane. Its function is as follows. Part of a membrane-bound complex that couples electron transfer with translocation of ions across the membrane. The sequence is that of Ion-translocating oxidoreductase complex subunit E from Aliivibrio fischeri (strain ATCC 700601 / ES114) (Vibrio fischeri).